The primary structure comprises 391 residues: 8-amino-7-oxononanoate synthase (391 aa).

Arginine 20 is a binding site for substrate. 106 to 107 serves as a coordination point for pyridoxal 5'-phosphate; sequence GY. Histidine 131 is a substrate binding site. Pyridoxal 5'-phosphate contacts are provided by serine 178, histidine 206, and threonine 234. Lysine 237 is subject to N6-(pyridoxal phosphate)lysine. Threonine 353 lines the substrate pocket.

This sequence belongs to the class-II pyridoxal-phosphate-dependent aminotransferase family. BioF subfamily. As to quaternary structure, homodimer. It depends on pyridoxal 5'-phosphate as a cofactor.

The enzyme catalyses 6-carboxyhexanoyl-[ACP] + L-alanine + H(+) = (8S)-8-amino-7-oxononanoate + holo-[ACP] + CO2. Its pathway is cofactor biosynthesis; biotin biosynthesis. Its function is as follows. Catalyzes the decarboxylative condensation of pimeloyl-[acyl-carrier protein] and L-alanine to produce 8-amino-7-oxononanoate (AON), [acyl-carrier protein], and carbon dioxide. This chain is 8-amino-7-oxononanoate synthase, found in Trichlorobacter lovleyi (strain ATCC BAA-1151 / DSM 17278 / SZ) (Geobacter lovleyi).